The chain runs to 1170 residues: Short transient receptor potential channel 2 (1170 aa).

The Cytoplasmic segment spans residues Met-1–Lys-627. Disordered stretches follow at residues Ser-64–Thr-113, Ala-142–Gly-231, and Glu-322–Ser-342. Residues Ser-74 to Ser-85 show a composition bias toward polar residues. The segment covering Gly-158–Arg-177 has biased composition (basic and acidic residues). ANK repeat units lie at residues Lys-300–Gly-329, Ser-346–Gln-376, Ile-377–Gly-405, and Pro-429–Arg-458. The chain crosses the membrane as a helical span at residues Leu-628–Ala-648. Residues Pro-649–Lys-658 are Extracellular-facing. Residues Ile-659–Leu-679 form a helical membrane-spanning segment. The Cytoplasmic portion of the chain corresponds to Gly-680–Glu-701. A helical membrane pass occupies residues Thr-702 to Ile-722. Residues Glu-723 to Asp-737 are Extracellular-facing. A helical membrane pass occupies residues Val-738–Ala-758. Residues Tyr-759–Gln-788 lie on the Cytoplasmic side of the membrane. The chain crosses the membrane as a helical span at residues Phe-789 to Ile-809. The Extracellular segment spans residues Leu-810 to Arg-832. The chain crosses the membrane as a helical span at residues Phe-833–Val-853. Topologically, residues Pro-854–Ala-898 are cytoplasmic. The helical transmembrane segment at Met-899 to Ile-919 threads the bilayer. Topologically, residues Thr-920 to Ser-1170 are extracellular. A coiled-coil region spans residues Arg-1030–Ala-1068. The disordered stretch occupies residues Leu-1118 to Ser-1170.

It belongs to the transient receptor (TC 1.A.4) family. STrpC subfamily. TRPC2 sub-subfamily. Expressed exclusively in vomeronasal organ neurons (sensory microvilli).

Its subcellular location is the membrane. In terms of biological role, thought to form a receptor-activated calcium permeant cation channel. Probably is operated by a phosphatidylinositol second messenger system activated by receptor tyrosine kinases or G-protein coupled receptors. Is not activated by intracellular calcium store depletion. This Rattus norvegicus (Rat) protein is Short transient receptor potential channel 2 (Trpc2).